The sequence spans 260 residues: 2-amino-5-formylamino-6-ribosylaminopyrimidin-4(3H)-one 5'-monophosphate deformylase (260 aa).

Residues E33, H35, D44, and H112 each contribute to the Fe cation site.

It belongs to the creatininase superfamily. FAPy deformylase family. In terms of assembly, homodimer. It depends on Fe(2+) as a cofactor. The cofactor is Zn(2+).

The enzyme catalyses 2-amino-5-formylamino-6-(5-phospho-D-ribosylamino)pyrimidin-4(3H)-one + H2O = 2,5-diamino-6-(1-D-ribosylamino)pyrimidin-4(3H)-one 5'-phosphate + formate + H(+). The protein operates within cofactor biosynthesis; coenzyme F420 biosynthesis. It functions in the pathway cofactor biosynthesis; riboflavin biosynthesis. In terms of biological role, catalyzes the hydrolysis of the formamide of 2-amino-5-formylamino-6-ribosylamino-4(3H)-pyrimidinone 5'-monophosphate (FAPy) to form 2,5-diamino-6-ribosylamino-4(3H)-pyrimidinone 5'-phosphate (APy). The polypeptide is 2-amino-5-formylamino-6-ribosylaminopyrimidin-4(3H)-one 5'-monophosphate deformylase (Methanococcus voltae (strain ATCC BAA-1334 / A3)).